The primary structure comprises 235 residues: MGTADSDEMAPEAPQHTHIDVHIHQESALAKLLLTCCSALRPRATQARGSSRLLVASWVMQIVLGILSAVLGGFFYIRDYTLLVTSGAAIWTGAVAVLAGAAAFIYEKRGGTYWALLRTLLTLAAFSTAIAALKLWNEDFRYGYSYYNSACRISSSSDWNTPAPTQSPEEVRRLHLCTSFMDMLKALFRTLQAMLLGVWILLLLASLTPLWLYCWRMFPTKGKRDQKEMLEVSGI.

S38 is modified (phosphoserine). 4 consecutive transmembrane segments (helical) span residues 55 to 75 (VASW…GGFF), 86 to 106 (SGAA…AFIY), 113 to 133 (YWAL…IAAL), and 193 to 213 (AMLL…LWLY).

The protein belongs to the TMEM176 family. As to quaternary structure, interacts with MCOLN2.

Its subcellular location is the membrane. The protein is Transmembrane protein 176A (TMEM176A) of Homo sapiens (Human).